The sequence spans 209 residues: Yop proteins translocation protein K (209 aa).

Functionally, belongs to an operon involved in the translocation of Yop proteins across the bacterial membranes or in the specific control of this function. The chain is Yop proteins translocation protein K (yscK) from Yersinia enterocolitica.